The sequence spans 319 residues: Tetrahydromethanopterin S-methyltransferase subunit H (319 aa).

The protein belongs to the MtrH family. As to quaternary structure, the complex is composed of 8 subunits; MtrA, MtrB, MtrC, MtrD, MtrE, MtrF, MtrG and MtrH.

The enzyme catalyses 5-methyl-5,6,7,8-tetrahydromethanopterin + coenzyme M + 2 Na(+)(in) = 5,6,7,8-tetrahydromethanopterin + methyl-coenzyme M + 2 Na(+)(out). The protein operates within one-carbon metabolism; methanogenesis from CO(2); methyl-coenzyme M from 5,10-methylene-5,6,7,8-tetrahydromethanopterin: step 2/2. Its function is as follows. Part of a complex that catalyzes the formation of methyl-coenzyme M and tetrahydromethanopterin from coenzyme M and methyl-tetrahydromethanopterin. This is an energy-conserving, sodium-ion translocating step. MtrH catalyzes the transfer of the methyl group from methyl-tetrahydromethanopterin to the corrinoid prosthetic group of MtrA. The chain is Tetrahydromethanopterin S-methyltransferase subunit H from Methanococcus maripaludis (strain DSM 14266 / JCM 13030 / NBRC 101832 / S2 / LL).